The chain runs to 603 residues: Adenine deaminase (603 aa).

This sequence belongs to the metallo-dependent hydrolases superfamily. Adenine deaminase family. In terms of assembly, homodimer. Mn(2+) serves as cofactor.

The enzyme catalyses adenine + H2O + H(+) = hypoxanthine + NH4(+). The sequence is that of Adenine deaminase from Klebsiella pneumoniae subsp. pneumoniae (strain ATCC 700721 / MGH 78578).